The sequence spans 318 residues: Biotin synthase (318 aa).

Positions 40–260 (DDIQKASLLS…VATARIIMPL (221 aa)) constitute a Radical SAM core domain. C55, C59, and C62 together coordinate [4Fe-4S] cluster. Positions 100, 132, 192, and 264 each coordinate [2Fe-2S] cluster.

The protein belongs to the radical SAM superfamily. Biotin synthase family. As to quaternary structure, homodimer. Requires [4Fe-4S] cluster as cofactor. [2Fe-2S] cluster is required as a cofactor.

It catalyses the reaction (4R,5S)-dethiobiotin + (sulfur carrier)-SH + 2 reduced [2Fe-2S]-[ferredoxin] + 2 S-adenosyl-L-methionine = (sulfur carrier)-H + biotin + 2 5'-deoxyadenosine + 2 L-methionine + 2 oxidized [2Fe-2S]-[ferredoxin]. Its pathway is cofactor biosynthesis; biotin biosynthesis; biotin from 7,8-diaminononanoate: step 2/2. Its function is as follows. Catalyzes the conversion of dethiobiotin (DTB) to biotin by the insertion of a sulfur atom into dethiobiotin via a radical-based mechanism. In Ruegeria pomeroyi (strain ATCC 700808 / DSM 15171 / DSS-3) (Silicibacter pomeroyi), this protein is Biotin synthase.